The chain runs to 510 residues: tRNA-2-methylthio-N(6)-dimethylallyladenosine synthase (510 aa).

The MTTase N-terminal domain occupies 19 to 144 (RTYQVRTFGC…LPVLLERARH (126 aa)). Positions 28, 73, 107, 181, 185, and 188 each coordinate [4Fe-4S] cluster. Residues 167–397 (RESPYAAWVS…TALQDRITYE (231 aa)) enclose the Radical SAM core domain. Positions 400 to 470 (QAQTGRTLEV…PHYLEADDVS (71 aa)) constitute a TRAM domain. A compositionally biased stretch (basic and acidic residues) spans 482–492 (AWEARQARPEP). The disordered stretch occupies residues 482-510 (AWEARQARPEPESTGPRPVGLGLPTLRRA).

It belongs to the methylthiotransferase family. MiaB subfamily. As to quaternary structure, monomer. Requires [4Fe-4S] cluster as cofactor.

The protein resides in the cytoplasm. It carries out the reaction N(6)-dimethylallyladenosine(37) in tRNA + (sulfur carrier)-SH + AH2 + 2 S-adenosyl-L-methionine = 2-methylsulfanyl-N(6)-dimethylallyladenosine(37) in tRNA + (sulfur carrier)-H + 5'-deoxyadenosine + L-methionine + A + S-adenosyl-L-homocysteine + 2 H(+). Its function is as follows. Catalyzes the methylthiolation of N6-(dimethylallyl)adenosine (i(6)A), leading to the formation of 2-methylthio-N6-(dimethylallyl)adenosine (ms(2)i(6)A) at position 37 in tRNAs that read codons beginning with uridine. The protein is tRNA-2-methylthio-N(6)-dimethylallyladenosine synthase of Kineococcus radiotolerans (strain ATCC BAA-149 / DSM 14245 / SRS30216).